Here is a 153-residue protein sequence, read N- to C-terminus: Ribosome maturation factor RimP (153 aa).

This sequence belongs to the RimP family.

It localises to the cytoplasm. Functionally, required for maturation of 30S ribosomal subunits. The sequence is that of Ribosome maturation factor RimP from Coxiella burnetii (strain RSA 331 / Henzerling II).